Consider the following 833-residue polypeptide: MDKEKSDPSCKSSDLKISNISIQVVSVPGKLPGRRLPRKPIGKARPRKQPKKRAPFWNVQNKIILFTVFLFILAVTAWTLLWLYISKTDSKDAFYFVGMFRITNIEFLPEYRQKESREFLSMAKTVQQVVNLVYTTSAFSKFYKQSVVADVSSNNKGGLLVHFWIVFVMPHAKGHIFCEECVAAILKDSIQTSITNRTSVGTLQGLAVDMDSVVLNAGLRSDYSSAVGSDNGCSQYFYADHLTLRYPLEISATSGQLMCHFKLVAIVGYLIRLSIESIQLEADNCITDSLTVYDSLLPIRITCVLLSGYRICEPTRTLMSFVSTNNLMLVTLKSPYVRRLAGIRAYFEVIPEQKCENTILVKEINSFEGKISSPYYPSYYPPKCKCNWTFQTSLSTLGIALKFHNYSITKKSMKGCEHGWWEINEHMYCGSYMDHETIFRVPSPLVHIQLQCSSRLSDKPLLVEYGSYNISQPCPAGSFRCSSGLCVPQAQRCDGVNDCFDESDELFCVTAKPACNTSIFRQHGPLVCDGFQDCEDGQDEQNCTRSIPCTNRTFKCGNDICFRKQNAQCDGIVDCPDRSDEEGCGCSRSSPFLHRVVGGSDSQEGTWPWQVSLHFVGSAHCGASVISREWLLSAAHCFHGNRLSDPTPWTAHLGMYVQGNAKFVSPVRRIVVHEYYNSQTFDYDIALLQLSIAWPETLRQLIQPICIPPVGQRVRSGEKCWVTGWGRRHEADSKGSPILQQAEVELIDQTVCVSTYGIITSRMLCAGVMSGKSDACKGDSGGPLSCRRKSDGKWILTGIVSWGYGCGRPNFPGVYTRVSNFVPWIHKYVPSLL.

Over 1 to 62 the chain is Cytoplasmic; that stretch reads MDKEKSDPSC…RAPFWNVQNK (62 aa). The interval 30–49 is disordered; the sequence is KLPGRRLPRKPIGKARPRKQ. A compositionally biased stretch (basic residues) spans 32 to 49; it reads PGRRLPRKPIGKARPRKQ. Residues 63–83 form a helical; Signal-anchor for type II membrane protein membrane-spanning segment; the sequence is IILFTVFLFILAVTAWTLLWL. Residues 84–829 are Extracellular-facing; it reads YISKTDSKDA…NFVPWIHKYV (746 aa). The 129-residue stretch at 92–220 folds into the SEA domain; it reads DAFYFVGMFR…DSVVLNAGLR (129 aa). N-linked (GlcNAc...) asparagine glycosylation is present at Asn196. 3 disulfides stabilise this stretch: Cys233/Cys259, Cys285/Cys312, and Cys355/Cys386. CUB domains are found at residues 233–350 and 355–471; these read CSQY…FEVI and CENT…YNIS. Residues Asn405 and Asn469 are each glycosylated (N-linked (GlcNAc...) asparagine). 2 LDL-receptor class A domains span residues 473 to 509 and 548 to 585; these read PCPA…LFCV and PCTN…EGCG. Intrachain disulfides connect Cys474–Cys486, Cys481–Cys499, Cys493–Cys508, Cys549–Cys561, Cys556–Cys575, Cys569–Cys584, and Cys621–Cys637. The region spanning 596–830 is the Peptidase S1 domain; sequence VVGGSDSQEG…FVPWIHKYVP (235 aa). Active-site charge relay system residues include His636 and Asp684. 3 cysteine pairs are disulfide-bonded: Cys720-Cys786, Cys752-Cys765, and Cys776-Cys806. Ser780 functions as the Charge relay system in the catalytic mechanism.

Belongs to the peptidase S1 family. In terms of assembly, forms a heterodimer with SERPINA5. In terms of processing, N-glycosylated.

It is found in the cell membrane. Its function is as follows. Serine protease which preferentially hydrolyzes peptides with Arg at the P1 position. The protein is Transmembrane protease serine 7 of Rattus norvegicus (Rat).